Reading from the N-terminus, the 72-residue chain is MSKEDVIELEGTVIEALPNAMFQVQLDNGHKVLAHVSGKLRMNFIRILPGDRVVVQLSPYDLTRGRIVWRSK.

Positions 1–72 (MSKEDVIELE…TRGRIVWRSK (72 aa)) constitute an S1-like domain.

Belongs to the IF-1 family. As to quaternary structure, component of the 30S ribosomal translation pre-initiation complex which assembles on the 30S ribosome in the order IF-2 and IF-3, IF-1 and N-formylmethionyl-tRNA(fMet); mRNA recruitment can occur at any time during PIC assembly.

It localises to the cytoplasm. Its function is as follows. One of the essential components for the initiation of protein synthesis. Stabilizes the binding of IF-2 and IF-3 on the 30S subunit to which N-formylmethionyl-tRNA(fMet) subsequently binds. Helps modulate mRNA selection, yielding the 30S pre-initiation complex (PIC). Upon addition of the 50S ribosomal subunit IF-1, IF-2 and IF-3 are released leaving the mature 70S translation initiation complex. This Caldicellulosiruptor saccharolyticus (strain ATCC 43494 / DSM 8903 / Tp8T 6331) protein is Translation initiation factor IF-1.